The primary structure comprises 332 residues: Cysteine and histidine-rich domain-containing protein 1 (332 aa).

Ala-2 is modified (N-acetylalanine). An interaction with PPP5C region spans residues 2 to 77 (ALLCYNRGCG…KPPEPVKPEV (76 aa)). Residues Cys-5, Cys-10, Cys-24, His-27, Cys-42, and Cys-43 each coordinate Zn(2+). 2 consecutive CHORD domains span residues 5-64 (CYNR…KGRH) and 157-216 (CKNG…KGKH). At Thr-47 the chain carries Phosphothreonine. The residue at position 51 (Ser-51) is a Phosphoserine. Zn(2+) contacts are provided by Cys-59, His-64, Cys-157, Cys-162, Cys-176, His-179, Cys-194, Cys-195, Cys-211, and His-216. The interval 65–316 (NSEKPPEPVK…AEPMQWASLE (252 aa)) is interaction with HSP90AA1 and HSP90AB1. The CS domain maps to 227-316 (VVPCRHDWHQ…AEPMQWASLE (90 aa)).

In terms of assembly, interacts with HSP90AA1, ROCK1 and ROCK2. Interacts with HSP90AB1 and PPP5C. In terms of tissue distribution, underexpressed in many breast and lung cancers.

Functionally, regulates centrosome duplication, probably by inhibiting the kinase activity of ROCK2. Proposed to act as co-chaperone for HSP90. May play a role in the regulation of NOD1 via a HSP90 chaperone complex. In vitro, has intrinsic chaperone activity. This function may be achieved by inhibiting association of ROCK2 with NPM1. Plays a role in ensuring the localization of the tyrosine kinase receptor EGFR to the plasma membrane, and thus ensures the subsequent regulation of EGFR activity and EGF-induced actin cytoskeleton remodeling. Involved in stress response. Prevents tumorigenesis. This Homo sapiens (Human) protein is Cysteine and histidine-rich domain-containing protein 1 (CHORDC1).